A 234-amino-acid chain; its full sequence is GTP cyclohydrolase 1 (234 aa).

Residues 1 to 26 (MDALIKPLRAGKPDAKPADPKGTEFR) form a disordered region. A compositionally biased stretch (basic and acidic residues) spans 11–26 (GKPDAKPADPKGTEFR). Cys123, His126, and Cys194 together coordinate Zn(2+).

Belongs to the GTP cyclohydrolase I family. As to quaternary structure, toroid-shaped homodecamer, composed of two pentamers of five dimers.

The enzyme catalyses GTP + H2O = 7,8-dihydroneopterin 3'-triphosphate + formate + H(+). It functions in the pathway cofactor biosynthesis; 7,8-dihydroneopterin triphosphate biosynthesis; 7,8-dihydroneopterin triphosphate from GTP: step 1/1. This Rhodopseudomonas palustris (strain BisB18) protein is GTP cyclohydrolase 1.